A 273-amino-acid chain; its full sequence is Phycocyanobilin lyase subunit alpha (273 aa).

Belongs to the CpcE/RpcE/PecE family. As to quaternary structure, cpcE and CpcF associate to form a lyase.

Its function is as follows. Required for the chromophorylation of the cpcA gene product. This is Phycocyanobilin lyase subunit alpha (cpcE) from Synechococcus elongatus (strain ATCC 33912 / PCC 7942 / FACHB-805) (Anacystis nidulans R2).